Consider the following 100-residue polypeptide: Large ribosomal subunit protein bL21 (100 aa).

The protein belongs to the bacterial ribosomal protein bL21 family. As to quaternary structure, part of the 50S ribosomal subunit. Contacts protein L20.

Functionally, this protein binds to 23S rRNA in the presence of protein L20. The sequence is that of Large ribosomal subunit protein bL21 from Ureaplasma parvum serovar 3 (strain ATCC 27815 / 27 / NCTC 11736).